Here is a 117-residue protein sequence, read N- to C-terminus: UPF0102 protein FTW_1281 (117 aa).

Belongs to the UPF0102 family.

This Francisella tularensis subsp. tularensis (strain WY96-3418) protein is UPF0102 protein FTW_1281.